The chain runs to 364 residues: Trans-enoyl reductase traG (364 aa).

An NADP(+)-binding site is contributed by V51 to K54. L136–L143 serves as a coordination point for substrate. Residues S176–T179, S199–N202, Y217, and L264–E265 each bind NADP(+). A286–F290 provides a ligand contact to substrate. M355 to S356 provides a ligand contact to NADP(+).

It belongs to the zinc-containing alcohol dehydrogenase family. As to quaternary structure, monomer.

Its pathway is secondary metabolite biosynthesis. In terms of biological role, trans-enoyl reductase; part of the tra gene cluster that produces terrestric acid. The clavatol biosynthesis cluster cla and the terrestric acid cluster tra are both involved in the production of peniphenones and penilactones. The non-reducing PKS claF is responsible for the formation of clavatol from successive condensations of 3 malonyl-CoA units, presumably with a simple acetyl-CoA starter unit, and 2 methylation steps. The esterase claE probably collaborates with claF by catalyzing the hydrolysis of ACP-bound acyl intermediates to free the ACP from stalled intermediates. The clavatol oxidase claD then converts clavatol to hydroxyclavatol. Spontaneous dehydration of hydroxyclavatol leads to the accumulation of the highly active ortho-quinone methide. On the other hand, the PKS-NRPS hybrid traA is involved in the formation of crustosic acid, with the help of traB and traD. The polyketide synthase module (PKS) of traA is responsible for the synthesis of the polyketide backbone via the condensation of an acetyl-CoA starter unit with 3 malonyl-CoA units. The downstream nonribosomal peptide synthetase (NRPS) module then amidates the carboxyl end of the polyketide with L-malic acid. Because traA lacks a designated enoylreductase (ER) domain, the required activity is provided the enoyl reductase traG. Crustosic acid undergoes decarboxylation and isomerization to the terrestric acid, catalyzed by the 2-oxoglutarate-dependent dioxygenase traH. Both acids are further converted to the 2 gamma-butyrolactones (R)-5-methyltetronic acid and (S)-5-carboxylmethyltetronic acid, with involvement of the cytochrome P450 monooxygenase claJ. Spontaneous addition of the methide to these gamma-butyrolactones leads to peniphenone D and penilactone D, which undergo again stereospecific attacking by methide to give penilactones A and B. In Penicillium crustosum (Blue mold fungus), this protein is Trans-enoyl reductase traG.